A 100-amino-acid chain; its full sequence is Putative protein p52 (100 aa).

The segment at 81–100 (PKSFKSSTDTAHSDRWLSLG) is disordered. Over residues 91 to 100 (AHSDRWLSLG) the composition is skewed to basic and acidic residues.

This is Putative protein p52 (52) from Escherichia coli (Bacteriophage APSE-1).